The chain runs to 192 residues: Early nodulin-like protein 7 (192 aa).

A signal peptide spans 1-27 (MMMMMMRSTCNLTLMLCICALVVASMA). A Phytocyanin domain is found at 32–134 (RDFKVGDEFG…GQRLIVEVMH (103 aa)). Residues N48, N89, and N101 are each glycosylated (N-linked (GlcNAc...) asparagine). A disulfide bridge connects residues C88 and C122. S166 is lipidated: GPI-anchor amidated serine. Residues 167-192 (AASSLPTACLLIPLFLTIASFRFISY) constitute a propeptide, removed in mature form.

It belongs to the early nodulin-like (ENODL) family. Mostly expressed in flowers, and, to a lower extent, in seeds, but barely in seedlings, stems, leaves and roots.

The protein resides in the cell membrane. Functionally, may act as a carbohydrate transporter. The chain is Early nodulin-like protein 7 from Arabidopsis thaliana (Mouse-ear cress).